The following is a 430-amino-acid chain: Probable sugar isomerase mlr5709 (430 aa).

3 residues coordinate Mn(2+): His257, Asp289, and Asp291.

It belongs to the rhamnose isomerase family. The cofactor is Mn(2+).

This is Probable sugar isomerase mlr5709 from Mesorhizobium japonicum (strain LMG 29417 / CECT 9101 / MAFF 303099) (Mesorhizobium loti (strain MAFF 303099)).